A 132-amino-acid chain; its full sequence is 3'-dehydrocarminate deglycosidase beta subunit (132 aa).

This sequence belongs to the C-glycoside deglycosidase beta subunit family. As to quaternary structure, heterodimer composed of an alpha subunit (CarB) and a beta subunit (CarC). The cofactor is Mg(2+).

It catalyses the reaction 3'-dehydrocarminate + H(+) = kermesate + 1,5-anhydro-D-erythro-hex-1-en-3-ulose. Activity is strongly reduced in the presence of chelating agents. Functionally, carbon-carbon bond-cleaving enzyme which participates in a carminate degradation pathway. Cleaves the C-C bond in 3'-dehydrocarminate to form kermesate. Also shows weak activity with other C-glycosides, such as 3''-dehydropuerarin (3''-oxo-puerarin), 3''-dehydroisoorientin (3''-oxo-homoorientin) and 3'-dehydromangiferin (3'-oxo-mangiferin). This Microbacterium sp protein is 3'-dehydrocarminate deglycosidase beta subunit.